The chain runs to 80 residues: RNA-binding protein Hfq (80 aa).

The Sm domain occupies 10-70 (DLFLNTVRKQ…ISTIMPGQPM (61 aa)).

The protein belongs to the Hfq family. Homohexamer.

Its function is as follows. RNA chaperone that binds small regulatory RNA (sRNAs) and mRNAs to facilitate mRNA translational regulation in response to envelope stress, environmental stress and changes in metabolite concentrations. Also binds with high specificity to tRNAs. This chain is RNA-binding protein Hfq, found in Rhizobium rhizogenes (strain K84 / ATCC BAA-868) (Agrobacterium radiobacter).